The following is a 421-amino-acid chain: Medium-chain specific acyl-CoA dehydrogenase, mitochondrial (421 aa).

Residues 1–25 constitute a mitochondrion transit peptide; the sequence is MAAAFGRCCRVLRSISRFHWRSQHT. Lysine 69 carries the post-translational modification N6-acetyllysine; alternate. An N6-succinyllysine; alternate modification is found at lysine 69. 158–167 lines the FAD pocket; that stretch reads YCVTEPGAGS. Serine 167 is a binding site for octanoyl-CoA. Lysine 179 bears the N6-succinyllysine mark. An FAD-binding site is contributed by 191 to 193; that stretch reads WIT. N6-acetyllysine; alternate is present on residues lysine 212, lysine 217, lysine 259, and lysine 271. An N6-succinyllysine; alternate mark is found at lysine 212, lysine 217, lysine 259, and lysine 271. Octanoyl-CoA is bound at residue aspartate 278. Lysine 279 bears the N6-acetyllysine mark. Residue arginine 281 participates in octanoyl-CoA binding. Lysine 301 is modified (N6-acetyllysine). FAD contacts are provided by residues 306-308 and 316-317; these read RKT and HQ. Octanoyl-CoA is bound by residues arginine 349 and threonine 351. Threonine 351 bears the Phosphothreonine mark. An FAD-binding site is contributed by 374-378; it reads QIFGG. Glutamate 401 is an octanoyl-CoA binding site. Residue glutamate 401 is the Proton acceptor of the active site. Residue 402–405 coordinates FAD; the sequence is GTSQ.

The protein belongs to the acyl-CoA dehydrogenase family. In terms of assembly, homotetramer. Interacts with the heterodimeric electron transfer flavoprotein ETF. It depends on FAD as a cofactor. Post-translationally, acetylated. Could occur at proximity of the cofactor-binding sites and reduce the catalytic activity. Could be deacetylated by SIRT3.

Its subcellular location is the mitochondrion matrix. The catalysed reaction is a medium-chain 2,3-saturated fatty acyl-CoA + oxidized [electron-transfer flavoprotein] + H(+) = a medium-chain (2E)-enoyl-CoA + reduced [electron-transfer flavoprotein]. The enzyme catalyses pentanoyl-CoA + oxidized [electron-transfer flavoprotein] + H(+) = (2E)-pentenoyl-CoA + reduced [electron-transfer flavoprotein]. It carries out the reaction hexanoyl-CoA + oxidized [electron-transfer flavoprotein] + H(+) = (2E)-hexenoyl-CoA + reduced [electron-transfer flavoprotein]. It catalyses the reaction octanoyl-CoA + oxidized [electron-transfer flavoprotein] + H(+) = (2E)-octenoyl-CoA + reduced [electron-transfer flavoprotein]. The catalysed reaction is decanoyl-CoA + oxidized [electron-transfer flavoprotein] + H(+) = (2E)-decenoyl-CoA + reduced [electron-transfer flavoprotein]. The enzyme catalyses dodecanoyl-CoA + oxidized [electron-transfer flavoprotein] + H(+) = (2E)-dodecenoyl-CoA + reduced [electron-transfer flavoprotein]. It carries out the reaction tetradecanoyl-CoA + oxidized [electron-transfer flavoprotein] + H(+) = (2E)-tetradecenoyl-CoA + reduced [electron-transfer flavoprotein]. It catalyses the reaction oxidized [electron-transfer flavoprotein] + hexadecanoyl-CoA + H(+) = (2E)-hexadecenoyl-CoA + reduced [electron-transfer flavoprotein]. The protein operates within lipid metabolism; mitochondrial fatty acid beta-oxidation. In terms of biological role, medium-chain specific acyl-CoA dehydrogenase is one of the acyl-CoA dehydrogenases that catalyze the first step of mitochondrial fatty acid beta-oxidation, an aerobic process breaking down fatty acids into acetyl-CoA and allowing the production of energy from fats. The first step of fatty acid beta-oxidation consists in the removal of one hydrogen from C-2 and C-3 of the straight-chain fatty acyl-CoA thioester, resulting in the formation of trans-2-enoyl-CoA. Electron transfer flavoprotein (ETF) is the electron acceptor that transfers electrons to the main mitochondrial respiratory chain via ETF-ubiquinone oxidoreductase (ETF dehydrogenase). Among the different mitochondrial acyl-CoA dehydrogenases, medium-chain specific acyl-CoA dehydrogenase acts specifically on acyl-CoAs with saturated 6 to 12 carbons long primary chains. The chain is Medium-chain specific acyl-CoA dehydrogenase, mitochondrial from Macaca fascicularis (Crab-eating macaque).